Consider the following 896-residue polypeptide: DNA mismatch repair protein MutS (896 aa).

618–625 lines the ATP pocket; sequence GPNMSGKS. Residues 805-825 are compositionally biased toward basic and acidic residues; that stretch reads GKESTKTGKGENKNISHKTES. The tract at residues 805 to 826 is disordered; the sequence is GKESTKTGKGENKNISHKTESD.

The protein belongs to the DNA mismatch repair MutS family.

Its function is as follows. This protein is involved in the repair of mismatches in DNA. It is possible that it carries out the mismatch recognition step. This protein has a weak ATPase activity. This is DNA mismatch repair protein MutS from Halothermothrix orenii (strain H 168 / OCM 544 / DSM 9562).